The primary structure comprises 611 residues: DNA-directed RNA polymerase subunit Rpo2C (611 aa).

4 residues coordinate Zn(2+): Cys-547, Cys-550, Cys-565, and Cys-568.

This sequence belongs to the RNA polymerase beta chain family. In terms of assembly, part of the RNA polymerase complex. The cofactor is Zn(2+).

It localises to the cytoplasm. The catalysed reaction is RNA(n) + a ribonucleoside 5'-triphosphate = RNA(n+1) + diphosphate. Its function is as follows. DNA-dependent RNA polymerase (RNAP) catalyzes the transcription of DNA into RNA using the four ribonucleoside triphosphates as substrates. The Rpo2 subunit (Rpo2N and Rpo2C in this organism) is implicated in DNA promoter recognition and in nucleotide binding. This is DNA-directed RNA polymerase subunit Rpo2C from Methanococcus vannielii (strain ATCC 35089 / DSM 1224 / JCM 13029 / OCM 148 / SB).